A 202-amino-acid chain; its full sequence is Ribonuclease HII (202 aa).

Residues 13–202 (KIEAGLDEAG…HFKPKQLDLF (190 aa)) form the RNase H type-2 domain. A divalent metal cation is bound by residues aspartate 19, glutamate 20, and aspartate 112.

The protein belongs to the RNase HII family. Requires Mn(2+) as cofactor. Mg(2+) serves as cofactor.

Its subcellular location is the cytoplasm. The catalysed reaction is Endonucleolytic cleavage to 5'-phosphomonoester.. Its function is as follows. Endonuclease that specifically degrades the RNA of RNA-DNA hybrids. The sequence is that of Ribonuclease HII from Cytophaga hutchinsonii (strain ATCC 33406 / DSM 1761 / CIP 103989 / NBRC 15051 / NCIMB 9469 / D465).